A 70-amino-acid polypeptide reads, in one-letter code: Waprin-Thr1 (70 aa).

Residues 1-19 (MKARLLLLSVVILVGMVSA) form the signal peptide. One can recognise a WAP domain in the interval 20-70 (ENEKAGSCPDVNQPIPPLGLCRNMCESDSGCPNNEKCCKNGCGFMTCSRPR). 4 cysteine pairs are disulfide-bonded: C27–C57, C40–C61, C44–C56, and C50–C66.

The protein belongs to the venom waprin family. In terms of tissue distribution, expressed by the venom gland.

It localises to the secreted. Damages membranes of susceptible bacteria. Has no hemolytic activity. Not toxic to mice. Does not inhibit the proteinases elastase and cathepsin G. The polypeptide is Waprin-Thr1 (Thrasops jacksonii (Jackson's black tree snake)).